A 616-amino-acid polypeptide reads, in one-letter code: MKQSKMLIPTLREMPSDAQVISHALLMRAGYVRQVSAGIYAYLPLANRVLEKLKNIMREEFDEIGAVELLAPSLLTADLWRESGRYETYGEDLYKLKNRDSSDFILGPTHEETMTSLVRDEITSYKKLPLNVYQIATKFRDEKRPRYGLLRGREFLMKDGYSYHADQDSLDETYLDYKKAYEKIFERAGLNFKPIIADAGAMGGKDSQEFIAITDDRINLEKWLVLSKNITSIDEIPESVLSEIQEELGKWLVAGEDTIVYAEGGDYAANIEMATSQFEPNVAYTEELELEKVATPGAKTIDEVSDFLEIDEEQTVKTLVYHADDELIVILLNGNDQLNEVKLTNHLGASFIEAASEAEVEEKFGAHFGSLGPIGLENVRIIADRKVELIKNAVVGANVDGYHYKNANFGRDFEVEEFVDLRTVNEGEISPDGRGTLKFARGIEIGHIFKLGTRYTEAMNANILDANGRSIPMLMGCYGIGVSRLLSAILEQFARIYVEKTPREEFKFSWSINFPKELAPFDIHLVPVNVKDEAAMELTSELEEKLRGKGYQVLVDDRNERAGVKFADSDLIGLPVRVTIGKKAAEGIVEVKIRATGEVVEINKDELVNTIEILSK.

This sequence belongs to the class-II aminoacyl-tRNA synthetase family. ProS type 1 subfamily. In terms of assembly, homodimer.

It is found in the cytoplasm. It catalyses the reaction tRNA(Pro) + L-proline + ATP = L-prolyl-tRNA(Pro) + AMP + diphosphate. Functionally, catalyzes the attachment of proline to tRNA(Pro) in a two-step reaction: proline is first activated by ATP to form Pro-AMP and then transferred to the acceptor end of tRNA(Pro). As ProRS can inadvertently accommodate and process non-cognate amino acids such as alanine and cysteine, to avoid such errors it has two additional distinct editing activities against alanine. One activity is designated as 'pretransfer' editing and involves the tRNA(Pro)-independent hydrolysis of activated Ala-AMP. The other activity is designated 'posttransfer' editing and involves deacylation of mischarged Ala-tRNA(Pro). The misacylated Cys-tRNA(Pro) is not edited by ProRS. This chain is Proline--tRNA ligase, found in Lactococcus lactis subsp. cremoris (strain MG1363).